We begin with the raw amino-acid sequence, 394 residues long: GPI mannosyltransferase 2 (394 aa).

9 helical membrane passes run 2-22 (LWKL…IIYF), 47-67 (YYNV…SVYF), 104-124 (LTSI…LYYL), 132-152 (FGLV…LTGN), 185-205 (SITN…NFTV), 232-252 (IILS…TNIY), 293-313 (IPNF…LGYM), 323-343 (LLPL…FWNI), and 371-391 (YAIG…AAFL).

The protein belongs to the PIGV family.

The protein localises to the endoplasmic reticulum membrane. It participates in glycolipid biosynthesis; glycosylphosphatidylinositol-anchor biosynthesis. Its function is as follows. Mannosyltransferase involved in glycosylphosphatidylinositol-anchor biosynthesis. Transfers the second mannose to the glycosylphosphatidylinositol during GPI precursor assembly. The protein is GPI mannosyltransferase 2 (GPI18) of Candida albicans (strain SC5314 / ATCC MYA-2876) (Yeast).